Consider the following 1230-residue polypeptide: Myosin-1 (1230 aa).

Residues methionine 1–aspartate 32 are disordered. The 675-residue stretch at valine 39–aspartate 713 folds into the Myosin motor domain. Position 132 to 139 (glycine 132 to threonine 139) interacts with ATP. The interval serine 403–alanine 485 is actin-binding. IQ domains lie at histidine 717–alanine 737 and alanine 738–glutamine 763. Positions arginine 771–proline 961 constitute a TH1 domain. Disordered stretches follow at residues glutamine 945–proline 1018, threonine 1033–lysine 1065, and alanine 1116–tryptophan 1230. Over residues threonine 1033–arginine 1045 the composition is skewed to polar residues. Pro residues-rich tracts occupy residues valine 1047–proline 1062 and threonine 1122–proline 1142. The region spanning serine 1064–proline 1123 is the SH3 domain. Residues arginine 1179–arginine 1214 show a composition bias toward low complexity.

Belongs to the TRAFAC class myosin-kinesin ATPase superfamily. Myosin family.

It is found in the cytoplasm. The protein resides in the cytoskeleton. It localises to the actin patch. Its function is as follows. Type-I myosin implicated in the organization of the actin cytoskeleton. Required for proper actin cytoskeleton polarization. At the cell cortex, assembles in patch-like structures together with proteins from the actin-polymerizing machinery and promotes actin assembly. Functions as actin nucleation-promoting factor (NPF) for the Arp2/3 complex. This chain is Myosin-1 (myoA), found in Sclerotinia sclerotiorum (strain ATCC 18683 / 1980 / Ss-1) (White mold).